The following is a 477-amino-acid chain: Transmembrane and coiled-coil domain protein 3 (477 aa).

S46 is modified (phosphoserine). A coiled-coil region spans residues 112–153; sequence KQVFEKKNQKSAHSIAQLQKKLEQYHRKLREIEQNGASRSSK. Disordered stretches follow at residues 168 to 188 and 249 to 277; these read KDAH…KSGM and PKYG…GAGG. Phosphoserine is present on S253. The span at 258 to 273 shows a compositional bias: polar residues; sequence SSGTSGSADSNGNQSF. A coiled-coil region spans residues 282–398; it reads DSQGKLAVIL…KLELHQQEQQ (117 aa). 2 helical membrane passes run 417 to 437 and 450 to 470; these read VILA…KFVS and FFAV…LCAI.

This sequence belongs to the TEX28 family. May form homodimers and heterodimers with TMCC2 or TMCC3 via the coiled-coil domains. Interacts with ribosomal proteins RPL4 and RPS6. In terms of tissue distribution, widely expressed, with highest levels in brain, spinal cord and testis.

The protein localises to the endoplasmic reticulum membrane. The polypeptide is Transmembrane and coiled-coil domain protein 3 (Homo sapiens (Human)).